A 112-amino-acid polypeptide reads, in one-letter code: RHVCHLANATISAEKDHCPVCITFTTSICTGYCQTMDPVYKTALSSFKQNICTYKEIRYDTIKLPDCLPGTDPFFTYPVALSCYCDLCKMDYSDCTVESSEPDVCMKRRISI.

Cystine bridges form between C4–C52, C18–C67, C21–C105, C29–C83, C33–C85, and C88–C95. N8 carries N-linked (GlcNAc...) asparagine glycosylation.

It belongs to the glycoprotein hormones subunit beta family. In terms of assembly, heterodimer of a common alpha chain and a unique beta chain which confers biological specificity to thyrotropin, lutropin, follitropin and gonadotropin.

It is found in the secreted. This Aquarana catesbeiana (American bullfrog) protein is Lutropin subunit beta (lhb).